Consider the following 128-residue polypeptide: Holo-[acyl-carrier-protein] synthase (128 aa).

Mg(2+)-binding residues include Asp8 and Glu57.

Belongs to the P-Pant transferase superfamily. AcpS family. Mg(2+) is required as a cofactor.

The protein resides in the cytoplasm. The enzyme catalyses apo-[ACP] + CoA = holo-[ACP] + adenosine 3',5'-bisphosphate + H(+). In terms of biological role, transfers the 4'-phosphopantetheine moiety from coenzyme A to a Ser of acyl-carrier-protein. The sequence is that of Holo-[acyl-carrier-protein] synthase from Syntrophus aciditrophicus (strain SB).